The sequence spans 325 residues: Outer spore wall protein LDS1 (325 aa).

At 1 to 91 (MSFTGSLALA…NTNKSSYSTT (91 aa)) the chain is on the cytoplasmic side. Residues 92-112 (MLGILSSYLIMFALVSFVYWA) form a helical membrane-spanning segment. The Extracellular portion of the chain corresponds to 113-118 (TITPMY). A helical membrane pass occupies residues 119–139 (TAFLIVLGPIGLFIAIFHSFL). Over 140–208 (QANVFTLLFM…VKYMLGLSVL (69 aa)) the chain is Cytoplasmic. A helical transmembrane segment spans residues 209 to 229 (FVLLVISFFPLIGPILFHILI). Topologically, residues 230-263 (SPFITQIYFTKVLRLQNFDNIQRRENIYLHAGQY) are extracellular. Residues 264 to 284 (ASFGFLAGLIESVPILAGFAI) form a helical membrane-spanning segment. The Cytoplasmic segment spans residues 285-325 (STNTIGSVLFNLDHPMVPENLVETQAEIEAAPQDINQQPNQ).

Belongs to the LDS family.

It localises to the prospore membrane. The protein resides in the lipid droplet. It is found in the spore wall. Its function is as follows. Involved in spore wall assembly. The sequence is that of Outer spore wall protein LDS1 from Saccharomyces cerevisiae (strain ATCC 204508 / S288c) (Baker's yeast).